Reading from the N-terminus, the 587-residue chain is Chaperonin CPN60, mitochondrial (587 aa).

The transit peptide at 1 to 32 (MYRLISSIASKARVARNCTSQIGSRLSSTRNY) directs the protein to the mitochondrion.

This sequence belongs to the chaperonin (HSP60) family.

It is found in the mitochondrion. Implicated in mitochondrial protein import and macromolecular assembly. May facilitate the correct folding of imported proteins. May also prevent misfolding and promote the refolding and proper assembly of unfolded polypeptides generated under stress conditions in the mitochondrial matrix. This Brassica napus (Rape) protein is Chaperonin CPN60, mitochondrial.